Here is a 220-residue protein sequence, read N- to C-terminus: Deoxyribose-phosphate aldolase (220 aa).

Residue Asp-89 is the Proton donor/acceptor of the active site. Lys-151 acts as the Schiff-base intermediate with acetaldehyde in catalysis. The active-site Proton donor/acceptor is the Lys-180.

Belongs to the DeoC/FbaB aldolase family. DeoC type 1 subfamily.

The protein resides in the cytoplasm. The catalysed reaction is 2-deoxy-D-ribose 5-phosphate = D-glyceraldehyde 3-phosphate + acetaldehyde. It functions in the pathway carbohydrate degradation; 2-deoxy-D-ribose 1-phosphate degradation; D-glyceraldehyde 3-phosphate and acetaldehyde from 2-deoxy-alpha-D-ribose 1-phosphate: step 2/2. Catalyzes a reversible aldol reaction between acetaldehyde and D-glyceraldehyde 3-phosphate to generate 2-deoxy-D-ribose 5-phosphate. The chain is Deoxyribose-phosphate aldolase from Staphylococcus epidermidis (strain ATCC 12228 / FDA PCI 1200).